The chain runs to 361 residues: Histidine biosynthesis bifunctional protein HisB (361 aa).

The histidinol-phosphatase stretch occupies residues 1–172 (MSQPTLFIDR…PKTTACERPP (172 aa)). Aspartate 9 acts as the Nucleophile in catalysis. Residues aspartate 9 and aspartate 11 each coordinate Mg(2+). The Proton donor role is filled by aspartate 11. Zn(2+)-binding residues include cysteine 92, histidine 94, cysteine 100, and cysteine 102. Mg(2+) is bound at residue aspartate 129. Residues 173 to 361 (RYAEVVRTTK…NELPSSKGVL (189 aa)) form an imidazoleglycerol-phosphate dehydratase region.

In the N-terminal section; belongs to the histidinol-phosphatase family. This sequence in the C-terminal section; belongs to the imidazoleglycerol-phosphate dehydratase family. Mg(2+) serves as cofactor. Zn(2+) is required as a cofactor.

It localises to the cytoplasm. It carries out the reaction D-erythro-1-(imidazol-4-yl)glycerol 3-phosphate = 3-(imidazol-4-yl)-2-oxopropyl phosphate + H2O. It catalyses the reaction L-histidinol phosphate + H2O = L-histidinol + phosphate. The protein operates within amino-acid biosynthesis; L-histidine biosynthesis; L-histidine from 5-phospho-alpha-D-ribose 1-diphosphate: step 6/9. It functions in the pathway amino-acid biosynthesis; L-histidine biosynthesis; L-histidine from 5-phospho-alpha-D-ribose 1-diphosphate: step 8/9. This Actinobacillus pleuropneumoniae serotype 7 (strain AP76) protein is Histidine biosynthesis bifunctional protein HisB.